The following is a 313-amino-acid chain: Protein FixB (313 aa).

Residue 255-283 (LYLAVGISGQIQHMVGANASQTIFAINKD) participates in FAD binding.

This sequence belongs to the ETF alpha-subunit/FixB family. Heterodimer of FixA and FixB.

It participates in amine and polyamine metabolism; carnitine metabolism. Required for anaerobic carnitine reduction. May bring reductant to CaiA. This chain is Protein FixB, found in Shigella dysenteriae serotype 1 (strain Sd197).